The chain runs to 445 residues: tRNA(Ile)-lysidine synthase (445 aa).

19–24 (SGGIDS) is an ATP binding site.

Belongs to the tRNA(Ile)-lysidine synthase family.

The protein resides in the cytoplasm. It carries out the reaction cytidine(34) in tRNA(Ile2) + L-lysine + ATP = lysidine(34) in tRNA(Ile2) + AMP + diphosphate + H(+). Ligates lysine onto the cytidine present at position 34 of the AUA codon-specific tRNA(Ile) that contains the anticodon CAU, in an ATP-dependent manner. Cytidine is converted to lysidine, thus changing the amino acid specificity of the tRNA from methionine to isoleucine. The polypeptide is tRNA(Ile)-lysidine synthase (Buchnera aphidicola subsp. Schizaphis graminum (strain Sg)).